A 467-amino-acid polypeptide reads, in one-letter code: Chromosomal replication initiator protein DnaA (467 aa).

The domain I, interacts with DnaA modulators stretch occupies residues 1 to 90; sequence MSLSLWQQCL…KPVTQTPQAA (90 aa). The domain II stretch occupies residues 91-130; sequence VTSNVAAPAQVAQTQPQRAAPSMRSGWDNVPAPAEPTYRS. Residues 131–347 form a domain III, AAA+ region region; the sequence is NVNVKHTFDN…GALNRVIANA (217 aa). ATP-binding residues include glycine 175, glycine 177, lysine 178, and threonine 179. The segment at 348–467 is domain IV, binds dsDNA; the sequence is NFTGRAITID…FSNLIRTLSS (120 aa).

It belongs to the DnaA family. Oligomerizes as a right-handed, spiral filament on DNA at oriC.

The protein resides in the cytoplasm. In terms of biological role, plays an essential role in the initiation and regulation of chromosomal replication. ATP-DnaA binds to the origin of replication (oriC) to initiate formation of the DNA replication initiation complex once per cell cycle. Binds the DnaA box (a 9 base pair repeat at the origin) and separates the double-stranded (ds)DNA. Forms a right-handed helical filament on oriC DNA; dsDNA binds to the exterior of the filament while single-stranded (ss)DNA is stabiized in the filament's interior. The ATP-DnaA-oriC complex binds and stabilizes one strand of the AT-rich DNA unwinding element (DUE), permitting loading of DNA polymerase. After initiation quickly degrades to an ADP-DnaA complex that is not apt for DNA replication. Binds acidic phospholipids. The sequence is that of Chromosomal replication initiator protein DnaA from Escherichia coli (strain ATCC 8739 / DSM 1576 / NBRC 3972 / NCIMB 8545 / WDCM 00012 / Crooks).